Consider the following 386-residue polypeptide: S-adenosylmethionine synthase (386 aa).

ATP is bound at residue histidine 16. Aspartate 18 is a Mg(2+) binding site. Glutamate 44 provides a ligand contact to K(+). Glutamate 57 and glutamine 100 together coordinate L-methionine. The flexible loop stretch occupies residues 100-110; the sequence is QSPDINQGVDR. ATP-binding positions include 164–166, 230–231, aspartate 239, 245–246, alanine 262, and lysine 266; these read DGK, KF, and RK. An L-methionine-binding site is contributed by aspartate 239. Residue lysine 270 participates in L-methionine binding.

This sequence belongs to the AdoMet synthase family. Homotetramer; dimer of dimers. Requires Mg(2+) as cofactor. It depends on K(+) as a cofactor.

Its subcellular location is the cytoplasm. It catalyses the reaction L-methionine + ATP + H2O = S-adenosyl-L-methionine + phosphate + diphosphate. The protein operates within amino-acid biosynthesis; S-adenosyl-L-methionine biosynthesis; S-adenosyl-L-methionine from L-methionine: step 1/1. Catalyzes the formation of S-adenosylmethionine (AdoMet) from methionine and ATP. The overall synthetic reaction is composed of two sequential steps, AdoMet formation and the subsequent tripolyphosphate hydrolysis which occurs prior to release of AdoMet from the enzyme. The chain is S-adenosylmethionine synthase from Helicobacter hepaticus (strain ATCC 51449 / 3B1).